The following is a 389-amino-acid chain: Phospho-N-acetylmuramoyl-pentapeptide-transferase (389 aa).

The next 10 helical transmembrane spans lie at 21–41 (FITF…LVTG), 70–90 (GTPT…TLLW), 97–117 (FIWV…VDDY), 134–154 (YMWQ…SVSA), 189–209 (TISY…VIVG), 222–242 (GLAI…AYLT), 259–279 (AGEL…FLWF), 286–306 (VFMG…IAVI), 311–331 (VVLF…MLQV), and 366–386 (QVVV…LSTL).

It belongs to the glycosyltransferase 4 family. MraY subfamily. Mg(2+) is required as a cofactor.

The protein resides in the cell inner membrane. It catalyses the reaction UDP-N-acetyl-alpha-D-muramoyl-L-alanyl-gamma-D-glutamyl-meso-2,6-diaminopimeloyl-D-alanyl-D-alanine + di-trans,octa-cis-undecaprenyl phosphate = di-trans,octa-cis-undecaprenyl diphospho-N-acetyl-alpha-D-muramoyl-L-alanyl-D-glutamyl-meso-2,6-diaminopimeloyl-D-alanyl-D-alanine + UMP. It participates in cell wall biogenesis; peptidoglycan biosynthesis. In terms of biological role, catalyzes the initial step of the lipid cycle reactions in the biosynthesis of the cell wall peptidoglycan: transfers peptidoglycan precursor phospho-MurNAc-pentapeptide from UDP-MurNAc-pentapeptide onto the lipid carrier undecaprenyl phosphate, yielding undecaprenyl-pyrophosphoryl-MurNAc-pentapeptide, known as lipid I. The protein is Phospho-N-acetylmuramoyl-pentapeptide-transferase of Janthinobacterium sp. (strain Marseille) (Minibacterium massiliensis).